A 455-amino-acid chain; its full sequence is Glutamyl-tRNA reductase (455 aa).

Substrate contacts are provided by residues T49–R52, S109, E114–Q116, and Q120. The active-site Nucleophile is the C50. Residue G189 to G194 coordinates NADP(+).

The protein belongs to the glutamyl-tRNA reductase family. In terms of assembly, homodimer.

It carries out the reaction (S)-4-amino-5-oxopentanoate + tRNA(Glu) + NADP(+) = L-glutamyl-tRNA(Glu) + NADPH + H(+). Its pathway is porphyrin-containing compound metabolism; protoporphyrin-IX biosynthesis; 5-aminolevulinate from L-glutamyl-tRNA(Glu): step 1/2. Functionally, catalyzes the NADPH-dependent reduction of glutamyl-tRNA(Glu) to glutamate 1-semialdehyde (GSA). The protein is Glutamyl-tRNA reductase of Bacillus subtilis (strain 168).